Reading from the N-terminus, the 93-residue chain is Aspartyl/glutamyl-tRNA(Asn/Gln) amidotransferase subunit C (93 aa).

It belongs to the GatC family. Heterotrimer of A, B and C subunits.

The catalysed reaction is L-glutamyl-tRNA(Gln) + L-glutamine + ATP + H2O = L-glutaminyl-tRNA(Gln) + L-glutamate + ADP + phosphate + H(+). It catalyses the reaction L-aspartyl-tRNA(Asn) + L-glutamine + ATP + H2O = L-asparaginyl-tRNA(Asn) + L-glutamate + ADP + phosphate + 2 H(+). Its function is as follows. Allows the formation of correctly charged Asn-tRNA(Asn) or Gln-tRNA(Gln) through the transamidation of misacylated Asp-tRNA(Asn) or Glu-tRNA(Gln) in organisms which lack either or both of asparaginyl-tRNA or glutaminyl-tRNA synthetases. The reaction takes place in the presence of glutamine and ATP through an activated phospho-Asp-tRNA(Asn) or phospho-Glu-tRNA(Gln). This is Aspartyl/glutamyl-tRNA(Asn/Gln) amidotransferase subunit C from Methanothrix thermoacetophila (strain DSM 6194 / JCM 14653 / NBRC 101360 / PT) (Methanosaeta thermophila).